The sequence spans 106 residues: ATP-dependent Clp protease adapter protein ClpS (106 aa).

This sequence belongs to the ClpS family. In terms of assembly, binds to the N-terminal domain of the chaperone ClpA.

Its function is as follows. Involved in the modulation of the specificity of the ClpAP-mediated ATP-dependent protein degradation. The polypeptide is ATP-dependent Clp protease adapter protein ClpS (Vibrio campbellii (strain ATCC BAA-1116)).